A 505-amino-acid polypeptide reads, in one-letter code: MSLWLPSEATVYLPPVPVSKVVSTDEYVARTNIYYHAGTSRLLAVGHPYFPIKKPNNNKILVPKVSGLQYRVFRIHLPDPNKFGFPDTSFYNPDTQRLVWACVGVEVGRGQPLGVGISGHPLLNKLDDTENASAYAANAGVDNRECISMDYKQTQLCLIGCKPPIGEHWGKGSPCTNVAVNPGDCPPLELINTVIQDGDMVDTGFGAMDFTTLQANKSEVPLDICTSICKYPDYIKMVSEPYGDSLFFYLRREQMFVRHLFNRAGAVGENVPDDLYIKGSGSTANLASSNYFPTPSGSMVTSDAQIFNKPYWLQRAQGHNNGICWGNQLFVTVVDTTRSTNMSLCAAISTSETTYKNTNFKEYLRHGEEYDLQFIFQLCKITLTADVMTYIHSMNSTILEDWNFGLQPPPGGTLEDTYRFVTSQAIACQKHTPPAPKEDPLKKYTFWEVNLKEKFSADLDQFPLGRKFLLQAGLKAKPKFTLGKRKATPTTSSTSTTAKRKKRKL.

The interval 480–505 (FTLGKRKATPTTSSTSTTAKRKKRKL) is disordered. The span at 488-497 (TPTTSSTSTT) shows a compositional bias: low complexity.

This sequence belongs to the papillomaviridae L1 protein family. In terms of assembly, self-assembles into homopentamers. The capsid has an icosahedral symmetry and consists of 72 capsomers, with each capsomer being a pentamer of L1. Interacts with the minor capsid protein L2; this interaction is necessary for viral genome encapsidation. Interacts with protein E2; this interaction enhances E2-dependent replication and transcription activation. Interacts with host KPNA2; this interaction mediates the nuclear localization of L1 capsomers. Interacts with host ITGA6. Interacts with host SDC1; this interaction promotes efficient infection of keratinocytes. Post-translationally, ISGylated by host HERC5, this results in dominant-negative effect on virus infectivity.

It is found in the virion. The protein localises to the host nucleus. Forms an icosahedral capsid with a T=7 symmetry and a 50 nm diameter. The capsid is composed of 72 pentamers linked to each other by disulfide bonds and associated with L2 proteins. Binds to heparan sulfate proteoglycans on cell surface of basal layer keratinocytes to provide initial virion attachment. This binding mediates a conformational change in the virus capsid that facilitates efficient infection. The virion enters the host cell via endocytosis. During virus trafficking, L1 protein dissociates from the viral DNA and the genomic DNA is released to the host nucleus. The virion assembly takes place within the cell nucleus. Encapsulates the genomic DNA together with protein L2. The polypeptide is Major capsid protein L1 (Homo sapiens (Human)).